The primary structure comprises 615 residues: DNA mismatch repair protein MutL (615 aa).

The tract at residues 370–397 (EPVAPRYTPAPASGSRPAAPWPNTQPGY) is disordered. A compositionally biased stretch (low complexity) spans 378–391 (PAPASGSRPAAPWP).

Belongs to the DNA mismatch repair MutL/HexB family.

Functionally, this protein is involved in the repair of mismatches in DNA. It is required for dam-dependent methyl-directed DNA mismatch repair. May act as a 'molecular matchmaker', a protein that promotes the formation of a stable complex between two or more DNA-binding proteins in an ATP-dependent manner without itself being part of a final effector complex. The sequence is that of DNA mismatch repair protein MutL from Shigella dysenteriae serotype 1 (strain Sd197).